The chain runs to 131 residues: Global transcriptional regulator Spx (131 aa).

Cysteines 10 and 13 form a disulfide.

This sequence belongs to the ArsC family. Spx subfamily. As to quaternary structure, interacts with the C-terminal domain of the alpha subunit of the RNAP.

It is found in the cytoplasm. Global transcriptional regulator that plays a key role in stress response and exerts either positive or negative regulation of genes. Acts by interacting with the C-terminal domain of the alpha subunit of the RNA polymerase (RNAP). This interaction can enhance binding of RNAP to the promoter region of target genes and stimulate their transcription, or block interaction of RNAP with activator. The sequence is that of Global transcriptional regulator Spx from Listeria innocua serovar 6a (strain ATCC BAA-680 / CLIP 11262).